We begin with the raw amino-acid sequence, 187 residues long: Threonylcarbamoyl-AMP synthase (187 aa).

One can recognise a YrdC-like domain in the interval 3–187; it reads EVLPADVAEL…AKSGQVIRKG (185 aa).

This sequence belongs to the SUA5 family. TsaC subfamily.

The protein localises to the cytoplasm. It carries out the reaction L-threonine + hydrogencarbonate + ATP = L-threonylcarbamoyladenylate + diphosphate + H2O. Functionally, required for the formation of a threonylcarbamoyl group on adenosine at position 37 (t(6)A37) in tRNAs that read codons beginning with adenine. Catalyzes the conversion of L-threonine, HCO(3)(-)/CO(2) and ATP to give threonylcarbamoyl-AMP (TC-AMP) as the acyladenylate intermediate, with the release of diphosphate. The protein is Threonylcarbamoyl-AMP synthase of Shewanella halifaxensis (strain HAW-EB4).